An 895-amino-acid chain; its full sequence is DNA mismatch repair protein MutS (895 aa).

Residue G632–S639 participates in ATP binding. Positions V824–Q849 are disordered. Over residues N837–Q849 the composition is skewed to polar residues.

This sequence belongs to the DNA mismatch repair MutS family.

Functionally, this protein is involved in the repair of mismatches in DNA. It is possible that it carries out the mismatch recognition step. This protein has a weak ATPase activity. The polypeptide is DNA mismatch repair protein MutS (Desulforapulum autotrophicum (strain ATCC 43914 / DSM 3382 / VKM B-1955 / HRM2) (Desulfobacterium autotrophicum)).